The sequence spans 173 residues: Translation initiation factor IF-3 (173 aa).

The protein belongs to the IF-3 family. In terms of assembly, monomer.

It is found in the cytoplasm. In terms of biological role, IF-3 binds to the 30S ribosomal subunit and shifts the equilibrium between 70S ribosomes and their 50S and 30S subunits in favor of the free subunits, thus enhancing the availability of 30S subunits on which protein synthesis initiation begins. This is Translation initiation factor IF-3 from Methylobacterium sp. (strain 4-46).